The following is a 940-amino-acid chain: Valine--tRNA ligase (940 aa).

Residues 47–57 carry the 'HIGH' region motif; it reads PNVTGVLHMGH. Residues 564–568 carry the 'KMSKS' region motif; sequence KLSKS. Lys567 is an ATP binding site. Residues 873-905 are a coiled coil; the sequence is EEHLLKEKGRLEKERVRLERAVENLERLLGDES.

Belongs to the class-I aminoacyl-tRNA synthetase family. ValS type 1 subfamily. In terms of assembly, monomer.

Its subcellular location is the cytoplasm. The enzyme catalyses tRNA(Val) + L-valine + ATP = L-valyl-tRNA(Val) + AMP + diphosphate. Its function is as follows. Catalyzes the attachment of valine to tRNA(Val). As ValRS can inadvertently accommodate and process structurally similar amino acids such as threonine, to avoid such errors, it has a 'posttransfer' editing activity that hydrolyzes mischarged Thr-tRNA(Val) in a tRNA-dependent manner. The polypeptide is Valine--tRNA ligase (Chlamydia pneumoniae (Chlamydophila pneumoniae)).